Reading from the N-terminus, the 264-residue chain is 5'-nucleotidase SurE (264 aa).

The a divalent metal cation site is built by aspartate 10, aspartate 11, serine 43, and asparagine 99.

This sequence belongs to the SurE nucleotidase family. The cofactor is a divalent metal cation.

Its subcellular location is the cytoplasm. It catalyses the reaction a ribonucleoside 5'-phosphate + H2O = a ribonucleoside + phosphate. Nucleotidase that shows phosphatase activity on nucleoside 5'-monophosphates. This chain is 5'-nucleotidase SurE, found in Methanococcus maripaludis (strain C7 / ATCC BAA-1331).